Here is a 264-residue protein sequence, read N- to C-terminus: Leukocyte receptor cluster member 1 (264 aa).

Disordered regions lie at residues 1–37 and 49–76; these read MNILPKKSWHVRNKDNVARVRRDEAQAREEEKERERR and FLRKKARHQNSLPELEAAEAGAPGSGPV. Residues 12–37 show a composition bias toward basic and acidic residues; the sequence is RNKDNVARVRRDEAQAREEEKERERR. A coiled-coil region spans residues 16-46; the sequence is NVARVRRDEAQAREEEKERERRVLLAQQEAR. A Phosphoserine modification is found at Ser59. Over residues 59-75 the composition is skewed to low complexity; it reads SLPELEAAEAGAPGSGP. Residues 89 to 115 are a coiled coil; the sequence is VIRGNKEYKEEKRQEKERQEKALGILT. Residues 118–264 form a disordered region; it reads GQSAAEAQTQ…PRQQDPHLTH (147 aa). 2 stretches are compositionally biased toward basic and acidic residues: residues 146-162 and 170-214; these read PDEKIKSRLDPLREMQK and HGGD…RSRA. Positions 196 to 222 form a coiled coil; the sequence is LDQLRAERLRREAAERSRAEALLARVQ. Ser245 bears the Phosphoserine mark.

This is Leukocyte receptor cluster member 1 (LENG1) from Homo sapiens (Human).